Here is a 127-residue protein sequence, read N- to C-terminus: Phosphoribosyl-AMP cyclohydrolase (127 aa).

Residue Asp78 participates in Mg(2+) binding. A Zn(2+)-binding site is contributed by Cys79. Mg(2+)-binding residues include Asp80 and Asp82. Zn(2+) is bound by residues Cys95 and Cys102.

This sequence belongs to the PRA-CH family. As to quaternary structure, homodimer. Mg(2+) serves as cofactor. Zn(2+) is required as a cofactor.

The protein resides in the cytoplasm. It carries out the reaction 1-(5-phospho-beta-D-ribosyl)-5'-AMP + H2O = 1-(5-phospho-beta-D-ribosyl)-5-[(5-phospho-beta-D-ribosylamino)methylideneamino]imidazole-4-carboxamide. Its pathway is amino-acid biosynthesis; L-histidine biosynthesis; L-histidine from 5-phospho-alpha-D-ribose 1-diphosphate: step 3/9. Its function is as follows. Catalyzes the hydrolysis of the adenine ring of phosphoribosyl-AMP. This is Phosphoribosyl-AMP cyclohydrolase from Salinibacter ruber (strain DSM 13855 / M31).